The chain runs to 164 residues: MMAGLSNAVSSLFLKEFVGAFLLSMRYFFRPKATLNYPFEKGPVSPRFRGEHALRRYPNGEERCIACKLCEAICPAQAITIEAGPRRNDGTRRTVRYDIDMVKCIYCGFCQEACPVDAIVEGPNFEFSTETREELYYDKEKLLANGDRWEREIARNIAMDSPYR.

2 4Fe-4S ferredoxin-type domains span residues 54 to 84 (LRRY…IEAG) and 95 to 124 (VRYD…EGPN). [4Fe-4S] cluster is bound by residues Cys-64, Cys-67, Cys-70, Cys-74, Cys-104, Cys-107, Cys-110, and Cys-114.

It belongs to the complex I 23 kDa subunit family. As to quaternary structure, NDH-1 is composed of 14 different subunits. Subunits NuoA, H, J, K, L, M, N constitute the membrane sector of the complex. [4Fe-4S] cluster serves as cofactor.

Its subcellular location is the cell inner membrane. It carries out the reaction a quinone + NADH + 5 H(+)(in) = a quinol + NAD(+) + 4 H(+)(out). Its function is as follows. NDH-1 shuttles electrons from NADH, via FMN and iron-sulfur (Fe-S) centers, to quinones in the respiratory chain. The immediate electron acceptor for the enzyme in this species is believed to be ubiquinone. Couples the redox reaction to proton translocation (for every two electrons transferred, four hydrogen ions are translocated across the cytoplasmic membrane), and thus conserves the redox energy in a proton gradient. This chain is NADH-quinone oxidoreductase subunit I 1, found in Rhizobium meliloti (strain 1021) (Ensifer meliloti).